Here is a 218-residue protein sequence, read N- to C-terminus: 3-dehydroquinate dehydratase (218 aa).

3-dehydroquinate is bound by residues 29-31 (EFR) and Arg56. The Proton donor/acceptor role is filled by His116. The Schiff-base intermediate with substrate role is filled by Lys142. The 3-dehydroquinate site is built by Arg180, Ser200, and Gln204.

It belongs to the type-I 3-dehydroquinase family. Homodimer.

The catalysed reaction is 3-dehydroquinate = 3-dehydroshikimate + H2O. It functions in the pathway metabolic intermediate biosynthesis; chorismate biosynthesis; chorismate from D-erythrose 4-phosphate and phosphoenolpyruvate: step 3/7. Functionally, involved in the third step of the chorismate pathway, which leads to the biosynthesis of aromatic amino acids. Catalyzes the cis-dehydration of 3-dehydroquinate (DHQ) and introduces the first double bond of the aromatic ring to yield 3-dehydroshikimate. The chain is 3-dehydroquinate dehydratase from Methanococcus vannielii (strain ATCC 35089 / DSM 1224 / JCM 13029 / OCM 148 / SB).